The chain runs to 312 residues: Beta-ketoacyl-[acyl-carrier-protein] synthase III (312 aa).

Catalysis depends on residues Cys112 and His237. The tract at residues 238 to 242 (QANIR) is ACP-binding. Asn267 is an active-site residue.

The protein belongs to the thiolase-like superfamily. FabH family. In terms of assembly, homodimer.

Its subcellular location is the cytoplasm. The catalysed reaction is malonyl-[ACP] + acetyl-CoA + H(+) = 3-oxobutanoyl-[ACP] + CO2 + CoA. It functions in the pathway lipid metabolism; fatty acid biosynthesis. Catalyzes the condensation reaction of fatty acid synthesis by the addition to an acyl acceptor of two carbons from malonyl-ACP. Catalyzes the first condensation reaction which initiates fatty acid synthesis and may therefore play a role in governing the total rate of fatty acid production. Possesses both acetoacetyl-ACP synthase and acetyl transacylase activities. Its substrate specificity determines the biosynthesis of branched-chain and/or straight-chain of fatty acids. The polypeptide is Beta-ketoacyl-[acyl-carrier-protein] synthase III (Listeria innocua serovar 6a (strain ATCC BAA-680 / CLIP 11262)).